We begin with the raw amino-acid sequence, 885 residues long: DDT domain-containing protein DDB_G0282237 (885 aa).

A WAC domain is found at 20–125 (EEYFVIKFTK…GEIVSFKKAN (106 aa)). Disordered stretches follow at residues 141–184 (ESDE…INAL), 201–264 (DDEN…SVRK), and 367–431 (LEDT…KENE). The segment covering 154-180 (SSSSSSTTTTTTTPTTPPTTTTTTSSS) has biased composition (low complexity). Over residues 210–264 (KNNGDTSSDKKGEKEKEKEKEKEKEKEKEKEKEKEKEKEKEKEKEKDSDTKSVRK) the composition is skewed to basic and acidic residues. A coiled-coil region spans residues 217–260 (SDKKGEKEKEKEKEKEKEKEKEKEKEKEKEKEKEKEKEKDSDTK). Residues 367–379 (LEDTEEESVDIES) are compositionally biased toward acidic residues. The segment covering 380-396 (NDNSNSNGNSNSNNNLD) has biased composition (low complexity). Residues 443–503 (SNTFGDFLMV…MKTIFTLPSY (61 aa)) enclose the DDT domain. A coiled-coil region spans residues 530–565 (FQNEVKRIAIEEKEKQEKLKQLEEQNIRMLNLANEL). Disordered regions lie at residues 562–632 (ANEL…WKEE) and 707–744 (KQDD…QKKP). The segment covering 567–577 (GSDDEDDEMKL) has biased composition (acidic residues). Basic and acidic residues predominate over residues 578 to 603 (DEDGNEIKKDVEMKDNDGTKDTKKDD). Coiled-coil stretches lie at residues 593-628 (NDGT…GEEE) and 674-782 (ASEK…RDRN). Acidic residues-rich tracts occupy residues 604-631 (EENE…EWKE) and 715-729 (AEDD…EEQQ).

It is found in the nucleus. The sequence is that of DDT domain-containing protein DDB_G0282237 from Dictyostelium discoideum (Social amoeba).